The following is a 381-amino-acid chain: Cobalt-precorrin-5B C(1)-methyltransferase (381 aa).

Belongs to the CbiD family.

It carries out the reaction Co-precorrin-5B + S-adenosyl-L-methionine = Co-precorrin-6A + S-adenosyl-L-homocysteine. It participates in cofactor biosynthesis; adenosylcobalamin biosynthesis; cob(II)yrinate a,c-diamide from sirohydrochlorin (anaerobic route): step 6/10. Catalyzes the methylation of C-1 in cobalt-precorrin-5B to form cobalt-precorrin-6A. The polypeptide is Cobalt-precorrin-5B C(1)-methyltransferase (Prochlorococcus marinus (strain SARG / CCMP1375 / SS120)).